Reading from the N-terminus, the 304-residue chain is tRNA-uridine aminocarboxypropyltransferase 1 (304 aa).

Disordered regions lie at residues 1-29 (MALS…QTTS) and 165-193 (RNKA…HEST). The span at 180 to 193 (RTTDEEGWDLHEST) shows a compositional bias: basic and acidic residues. The short motif at 206–209 (DSTW) is the DXTW element.

It belongs to the TDD superfamily. DTWD1 family.

It localises to the nucleus. The enzyme catalyses a uridine in tRNA + S-adenosyl-L-methionine = a 3-[(3S)-3-amino-3-carboxypropyl]uridine in tRNA + S-methyl-5'-thioadenosine + H(+). Functionally, catalyzes the formation of 3-(3-amino-3-carboxypropyl)uridine (acp3U) at position 20 in the D-loop of several cytoplasmic tRNAs (acp3U(20)). The polypeptide is tRNA-uridine aminocarboxypropyltransferase 1 (Mus musculus (Mouse)).